Consider the following 164-residue polypeptide: Putative HTH-type transcriptional regulator ORF2 (164 aa).

The 130-residue stretch at 2–131 (RLTTKGRYAV…SGISLADLVA (130 aa)) folds into the HTH rrf2-type domain.

The protein is Putative HTH-type transcriptional regulator ORF2 of Azotobacter vinelandii.